Consider the following 210-residue polypeptide: Na(+)-translocating NADH-quinone reductase subunit D (210 aa).

The next 6 membrane-spanning stretches (helical) occupy residues 10–30, 42–62, 72–92, 103–123, 131–151, and 178–198; these read ILFAPFLDNNPIALQVLGVCS, FVMTLAVMFVTAFSNLFVSLI, IIVQMAIIASLVIVVDQVLKA, VFVGLIITNCIVMGRAEAYAM, FIDGVGNGLGYGFVLITVAFF, and NGLMLLAPSAFFLIGFMIWAI.

Belongs to the NqrDE/RnfAE family. As to quaternary structure, composed of six subunits; NqrA, NqrB, NqrC, NqrD, NqrE and NqrF.

Its subcellular location is the cell inner membrane. The enzyme catalyses a ubiquinone + n Na(+)(in) + NADH + H(+) = a ubiquinol + n Na(+)(out) + NAD(+). Its function is as follows. NQR complex catalyzes the reduction of ubiquinone-1 to ubiquinol by two successive reactions, coupled with the transport of Na(+) ions from the cytoplasm to the periplasm. NqrA to NqrE are probably involved in the second step, the conversion of ubisemiquinone to ubiquinol. The chain is Na(+)-translocating NADH-quinone reductase subunit D from Photobacterium profundum (strain SS9).